The chain runs to 160 residues: Cathelin-related peptide SC5 (160 aa).

The first 29 residues, methionine 1–alanine 29, serve as a signal peptide directing secretion. Residues glutamine 30–valine 131 constitute a propeptide that is removed on maturation. 2 disulfides stabilise this stretch: cysteine 86–cysteine 97 and cysteine 108–cysteine 125.

This sequence belongs to the cathelicidin family.

The protein resides in the secreted. In terms of biological role, broad spectrum bactericidal agent. The sequence is that of Cathelin-related peptide SC5 from Ovis aries (Sheep).